A 720-amino-acid chain; its full sequence is MSLSDADHELVVEEIGREPTRAEAALFENLWSEHCAYRSSRPLLSAFDSEGDQVVIGPGDDAAVVSLPSHGDGEEMYITMGVESHNHPSYVDPFDGAATGVGGIVRDTLSMGAYPIALADCLYFGDFDREHSRYLFEGVVEGISHYGNCIGVPTVTGSVAFHDDYEGNPLVNVSCIGLLEPERTITAEAQEPGNKLVLVGNATGRDGLGGASFASEDLAEDAETEDRPAVQVGDPYSEKLLVECNEALLDEELVESARDLGAAGLGGASSELIAKGGLGARIELDRVHEREPNMNAMEYLLAESQERMVYEVAPEDVDRVAELAERFDLGCSVIGELTEPGTNYVCTFEGETVVDVDAAFLGDGAPMNDLPSDAPPKQERDLPTVSLDEAFERIVSSPNCASKRWVYRQYDHEVQVRTSVLPGDDAALLAIREAGTGLAFSAGADPNWTDAAPYEGARAVALENATNVAAKGATPHAAVDCLNGGNPEKPDVYGGFKGIVDGLADMCSDLDVPVVGGNVSLYNDSQDGPIPPTPTLALVGVKEGYDAPPLSLSGEGRLVVVGDTALEGKTDPRLGGSEYTAQFGGTDRFPALPVDSTDVVETIAEVADADHVLASHDVSHGGLAVTLAEMVHEDAGASVEIGTTEHGTPARLLFNERPGRVVFETTDPAAVREAFDGVAPVTELGEANDSNGLDITVNDETLAYNVADIADLRSVIDDEL.

Residue His-34 is part of the active site. Tyr-37 contributes to the ATP binding site. A Mg(2+)-binding site is contributed by Glu-83. Residues 84-87 and Arg-106 contribute to the substrate site; that span reads SHNH. His-85 acts as the Proton acceptor in catalysis. Asp-107 serves as a coordination point for Mg(2+). Position 231 (Gln-231) interacts with substrate. Asp-259 provides a ligand contact to Mg(2+). 303–305 is a binding site for substrate; that stretch reads ESQ. Asp-480 and Gly-517 together coordinate ATP. Asn-518 contacts Mg(2+). Ser-520 lines the substrate pocket.

The protein belongs to the FGAMS family. In terms of assembly, monomer. Part of the FGAM synthase complex composed of 1 PurL, 1 PurQ and 2 PurS subunits.

The protein resides in the cytoplasm. The enzyme catalyses N(2)-formyl-N(1)-(5-phospho-beta-D-ribosyl)glycinamide + L-glutamine + ATP + H2O = 2-formamido-N(1)-(5-O-phospho-beta-D-ribosyl)acetamidine + L-glutamate + ADP + phosphate + H(+). Its pathway is purine metabolism; IMP biosynthesis via de novo pathway; 5-amino-1-(5-phospho-D-ribosyl)imidazole from N(2)-formyl-N(1)-(5-phospho-D-ribosyl)glycinamide: step 1/2. In terms of biological role, part of the phosphoribosylformylglycinamidine synthase complex involved in the purines biosynthetic pathway. Catalyzes the ATP-dependent conversion of formylglycinamide ribonucleotide (FGAR) and glutamine to yield formylglycinamidine ribonucleotide (FGAM) and glutamate. The FGAM synthase complex is composed of three subunits. PurQ produces an ammonia molecule by converting glutamine to glutamate. PurL transfers the ammonia molecule to FGAR to form FGAM in an ATP-dependent manner. PurS interacts with PurQ and PurL and is thought to assist in the transfer of the ammonia molecule from PurQ to PurL. This chain is Phosphoribosylformylglycinamidine synthase subunit PurL, found in Haloarcula marismortui (strain ATCC 43049 / DSM 3752 / JCM 8966 / VKM B-1809) (Halobacterium marismortui).